The primary structure comprises 84 residues: Small ribosomal subunit protein uS17 (84 aa).

Belongs to the universal ribosomal protein uS17 family. In terms of assembly, part of the 30S ribosomal subunit.

Functionally, one of the primary rRNA binding proteins, it binds specifically to the 5'-end of 16S ribosomal RNA. The protein is Small ribosomal subunit protein uS17 of Thermoanaerobacter pseudethanolicus (strain ATCC 33223 / 39E) (Clostridium thermohydrosulfuricum).